We begin with the raw amino-acid sequence, 335 residues long: (+)-caryolan-1-ol synthase (335 aa).

5 residues coordinate Mg(2+): Asp83, Asp87, Asn220, Ser224, and Glu228. The DDXXD motif signature appears at 83–87; the sequence is DDEFD. An NSE/DTE motif motif is present at residues 220–228; sequence NDICSFEKE.

This sequence belongs to the terpene synthase family. The cofactor is Mg(2+). Mn(2+) is required as a cofactor.

It carries out the reaction (2E,6E)-farnesyl diphosphate = (+)-(E)-beta-caryophyllene + diphosphate. The catalysed reaction is (+)-(E)-beta-caryophyllene + H2O = (+)-caryolan-1-ol. It functions in the pathway secondary metabolite biosynthesis; terpenoid biosynthesis. In terms of biological role, sesquiterpene cyclase that first catalyzes the cyclization of farnesyl diphosphate (FPP) to the bicyclic sesquiterpene (+)-beta-caryophyllene intermediate, and then its conversion to (+)-caryolan-1-ol via a second cyclization and the addition of a water molecule. This chain is (+)-caryolan-1-ol synthase (gcoA), found in Streptomyces griseus subsp. griseus (strain JCM 4626 / CBS 651.72 / NBRC 13350 / KCC S-0626 / ISP 5235).